Here is an 86-residue protein sequence, read N- to C-terminus: Small ribosomal subunit protein bS16c (86 aa).

The protein belongs to the bacterial ribosomal protein bS16 family.

It is found in the plastid. The protein localises to the chloroplast. This Liriodendron tulipifera (Tuliptree) protein is Small ribosomal subunit protein bS16c.